The following is a 267-amino-acid chain: Putative N-acetylmuramoyl-L-alanine amidase RC0497 (267 aa).

The tract at residues Met-1–Pro-25 is disordered. Positions Asn-10–Asn-19 are enriched in polar residues. The N-acetylmuramoyl-L-alanine amidase domain maps to Thr-33 to Gly-141.

This sequence belongs to the N-acetylmuramoyl-L-alanine amidase 2 family.

It is found in the secreted. The catalysed reaction is Hydrolyzes the link between N-acetylmuramoyl residues and L-amino acid residues in certain cell-wall glycopeptides.. In Rickettsia conorii (strain ATCC VR-613 / Malish 7), this protein is Putative N-acetylmuramoyl-L-alanine amidase RC0497.